Consider the following 304-residue polypeptide: Nod factor export ATP-binding protein I (304 aa).

An ABC transporter domain is found at 6–236; the sequence is IDLAGVKKSF…HIGCQVIEIF (231 aa). 38–45 serves as a coordination point for ATP; the sequence is GPNGAGKS.

This sequence belongs to the ABC transporter superfamily. Lipooligosaccharide exporter (TC 3.A.1.102) family. The complex is composed of two ATP-binding proteins (NodI) and two transmembrane proteins (NodJ).

It is found in the cell inner membrane. Its function is as follows. Part of the ABC transporter complex NodIJ involved in the export of the nodulation factors (Nod factors), the bacterial signal molecules that induce symbiosis and subsequent nodulation induction. Nod factors are LCO (lipo-chitin oligosaccharide), a modified beta-1,4-linked N-acetylglucosamine oligosaccharide. This subunit is responsible for energy coupling to the transport system. The protein is Nod factor export ATP-binding protein I of Rhizobium sp. (strain N33).